The chain runs to 175 residues: Pituitary adenylate cyclase-activating polypeptide (175 aa).

Residues 1 to 24 (MTMCSGARLALLVYGIIMHNSVSC) form the signal peptide. Positions 25 to 78 (SPAAGLSFPGIRPEEEAYDQDGNPLQDFYDWDPPGAGSPASALRDAYALYYPAD) are excised as a propeptide. Positions 149–157 (VKKYLAAVL) are important for receptor binding. Residue leucine 157 is modified to Leucine amide. Lysine 168 carries the lysine amide modification. Positions 172–175 (IAYL) are excised as a propeptide.

Belongs to the glucagon family.

The protein localises to the secreted. Its function is as follows. PACAP is a neuropeptide involved in diverse array of physiological processes through activating the PACAP subfamily of class B1 G protein-coupled receptors: VIP receptor 1 (VIPR1), VIP receptor 2 (VIPR2), and PACAP type I receptor (ADCYAP1R1). Exerts neuroprotective and general cytoprotective effects due to anti-apoptotic, anti-inflammatory, and antioxidant actions. Promotes neuron projection development through the RAPGEF2/Rap1/B-Raf/ERK pathway. In chromaffin cells, induces long-lasting increase of intracellular calcium concentrations and neuroendocrine secretion. Involved in the control of glucose homeostasis, induces insulin secretion by pancreatic beta cells. PACAP exists in two bioactive forms from proteolysis of the same precursor protein, PACAP27 and PACAP38, which differ by eleven amino acid residues in the C-terminus. This is Pituitary adenylate cyclase-activating polypeptide (Adcyap1) from Rattus norvegicus (Rat).